A 120-amino-acid polypeptide reads, in one-letter code: MSKKFSRRKEQREKKKIALERIDILFNLAERVFAYDKELANRYVEIALAVQQKAKVRMPRKWKRRYCKKCHSFLVPGVNARVRLRQKRMPHVVIKCLECGHIMRYPYLREKKERRKAKKQ.

Zn(2+) is bound by residues Cys-67, Cys-70, Cys-96, and Cys-99.

It belongs to the eukaryotic/archaeal RNase P protein component 4 family. As to quaternary structure, consists of a catalytic RNA component and at least 4-5 protein subunits. The cofactor is Zn(2+).

Its subcellular location is the cytoplasm. The enzyme catalyses Endonucleolytic cleavage of RNA, removing 5'-extranucleotides from tRNA precursor.. Its function is as follows. Part of ribonuclease P, a protein complex that generates mature tRNA molecules by cleaving their 5'-ends. This chain is Ribonuclease P protein component 4, found in Thermococcus sibiricus (strain DSM 12597 / MM 739).